Reading from the N-terminus, the 356-residue chain is Dual-specificity RNA methyltransferase RlmN (356 aa).

The active-site Proton acceptor is glutamate 87. The 234-residue stretch at 106–339 (QEAKYTICVS…CTIRDSKGID (234 aa)) folds into the Radical SAM core domain. Cysteines 113 and 344 form a disulfide. The [4Fe-4S] cluster site is built by cysteine 120, cysteine 124, and cysteine 127. S-adenosyl-L-methionine contacts are provided by residues 170-171 (GE), serine 202, 225-227 (SLH), and asparagine 301. The active-site S-methylcysteine intermediate is the cysteine 344.

The protein belongs to the radical SAM superfamily. RlmN family. The cofactor is [4Fe-4S] cluster.

The protein localises to the cytoplasm. It carries out the reaction adenosine(2503) in 23S rRNA + 2 reduced [2Fe-2S]-[ferredoxin] + 2 S-adenosyl-L-methionine = 2-methyladenosine(2503) in 23S rRNA + 5'-deoxyadenosine + L-methionine + 2 oxidized [2Fe-2S]-[ferredoxin] + S-adenosyl-L-homocysteine. The catalysed reaction is adenosine(37) in tRNA + 2 reduced [2Fe-2S]-[ferredoxin] + 2 S-adenosyl-L-methionine = 2-methyladenosine(37) in tRNA + 5'-deoxyadenosine + L-methionine + 2 oxidized [2Fe-2S]-[ferredoxin] + S-adenosyl-L-homocysteine. Its function is as follows. Specifically methylates position 2 of adenine 2503 in 23S rRNA and position 2 of adenine 37 in tRNAs. m2A2503 modification seems to play a crucial role in the proofreading step occurring at the peptidyl transferase center and thus would serve to optimize ribosomal fidelity. The chain is Dual-specificity RNA methyltransferase RlmN from Sulfurimonas denitrificans (strain ATCC 33889 / DSM 1251) (Thiomicrospira denitrificans (strain ATCC 33889 / DSM 1251)).